The following is a 107-amino-acid chain: Phosphoribosyl-ATP pyrophosphatase (107 aa).

Belongs to the PRA-PH family.

Its subcellular location is the cytoplasm. The enzyme catalyses 1-(5-phospho-beta-D-ribosyl)-ATP + H2O = 1-(5-phospho-beta-D-ribosyl)-5'-AMP + diphosphate + H(+). The protein operates within amino-acid biosynthesis; L-histidine biosynthesis; L-histidine from 5-phospho-alpha-D-ribose 1-diphosphate: step 2/9. The protein is Phosphoribosyl-ATP pyrophosphatase of Bacillus cereus (strain ZK / E33L).